Reading from the N-terminus, the 246-residue chain is Adenosylcobinamide-GDP ribazoletransferase (246 aa).

Transmembrane regions (helical) follow at residues Ile-34 to Leu-54, Cys-59 to Phe-79, Gly-113 to Leu-133, Pro-138 to Tyr-158, Leu-171 to Leu-191, and Val-194 to Leu-214.

Belongs to the CobS family. Requires Mg(2+) as cofactor.

The protein localises to the cell inner membrane. The catalysed reaction is alpha-ribazole + adenosylcob(III)inamide-GDP = adenosylcob(III)alamin + GMP + H(+). It catalyses the reaction alpha-ribazole 5'-phosphate + adenosylcob(III)inamide-GDP = adenosylcob(III)alamin 5'-phosphate + GMP + H(+). The protein operates within cofactor biosynthesis; adenosylcobalamin biosynthesis; adenosylcobalamin from cob(II)yrinate a,c-diamide: step 7/7. Functionally, joins adenosylcobinamide-GDP and alpha-ribazole to generate adenosylcobalamin (Ado-cobalamin). Also synthesizes adenosylcobalamin 5'-phosphate from adenosylcobinamide-GDP and alpha-ribazole 5'-phosphate. In Klebsiella pneumoniae (strain 342), this protein is Adenosylcobinamide-GDP ribazoletransferase.